A 201-amino-acid polypeptide reads, in one-letter code: FMN-dependent NADH:quinone oxidoreductase (201 aa).

Residues Ser-9 and Met-93–Phe-96 contribute to the FMN site.

The protein belongs to the azoreductase type 1 family. In terms of assembly, homodimer. FMN is required as a cofactor.

It catalyses the reaction 2 a quinone + NADH + H(+) = 2 a 1,4-benzosemiquinone + NAD(+). It carries out the reaction N,N-dimethyl-1,4-phenylenediamine + anthranilate + 2 NAD(+) = 2-(4-dimethylaminophenyl)diazenylbenzoate + 2 NADH + 2 H(+). Its function is as follows. Quinone reductase that provides resistance to thiol-specific stress caused by electrophilic quinones. In terms of biological role, also exhibits azoreductase activity. Catalyzes the reductive cleavage of the azo bond in aromatic azo compounds to the corresponding amines. This chain is FMN-dependent NADH:quinone oxidoreductase, found in Bradyrhizobium sp. (strain BTAi1 / ATCC BAA-1182).